We begin with the raw amino-acid sequence, 282 residues long: MPELPEVESVRRGLEPYVVGRSFAAVEVHHPRANRGQEAPLSALLVGRKIAAVARRGKFMWLEFADEDHSDPARDVLFIHLGMSGQVRIGEVDSPHVRIAAVLDDTTRLSFVDQRTFGYWRLGPWLSMAHIAPDPLETDFDLTAAGRRLRAKRTVVKAALLDQTVLSGVGNIYADEALWAVQISPLKKASALRQRDAVAVISAAADVMRAALAVGGTSFDALYVNVNGESGYFDRSLHVYGRGGQPCERCGEEILKTVLGGRGTHYCPSCQNRGVGRKSAAN.

Proline 2 acts as the Schiff-base intermediate with DNA in catalysis. Glutamate 3 serves as the catalytic Proton donor. Lysine 58 serves as the catalytic Proton donor; for beta-elimination activity. DNA is bound by residues histidine 96, arginine 115, and lysine 152. The FPG-type zinc-finger motif lies at 238–272; sequence HVYGRGGQPCERCGEEILKTVLGGRGTHYCPSCQN. Arginine 262 functions as the Proton donor; for delta-elimination activity in the catalytic mechanism.

It belongs to the FPG family. Monomer. The cofactor is Zn(2+).

It carries out the reaction Hydrolysis of DNA containing ring-opened 7-methylguanine residues, releasing 2,6-diamino-4-hydroxy-5-(N-methyl)formamidopyrimidine.. It catalyses the reaction 2'-deoxyribonucleotide-(2'-deoxyribose 5'-phosphate)-2'-deoxyribonucleotide-DNA = a 3'-end 2'-deoxyribonucleotide-(2,3-dehydro-2,3-deoxyribose 5'-phosphate)-DNA + a 5'-end 5'-phospho-2'-deoxyribonucleoside-DNA + H(+). Functionally, involved in base excision repair of DNA damaged by oxidation or by mutagenic agents. Acts as a DNA glycosylase that recognizes and removes damaged bases. Has a preference for oxidized purines, such as 7,8-dihydro-8-oxoguanine (8-oxoG). Has AP (apurinic/apyrimidinic) lyase activity and introduces nicks in the DNA strand. Cleaves the DNA backbone by beta-delta elimination to generate a single-strand break at the site of the removed base with both 3'- and 5'-phosphates. The sequence is that of Formamidopyrimidine-DNA glycosylase from Corynebacterium aurimucosum (strain ATCC 700975 / DSM 44827 / CIP 107346 / CN-1) (Corynebacterium nigricans).